The sequence spans 222 residues: Small ribosomal subunit protein uS3 (222 aa).

Residues 38 to 106 form the KH type-2 domain; sequence IRKFISEKLA…NVHINIVEIK (69 aa).

This sequence belongs to the universal ribosomal protein uS3 family. Part of the 30S ribosomal subunit. Forms a tight complex with proteins S10 and S14.

Functionally, binds the lower part of the 30S subunit head. Binds mRNA in the 70S ribosome, positioning it for translation. The sequence is that of Small ribosomal subunit protein uS3 from Lactobacillus johnsonii (strain CNCM I-12250 / La1 / NCC 533).